A 129-amino-acid chain; its full sequence is uncharacterized protein (129 aa).

It is found in the cytoplasm. The protein resides in the cytosol. The protein localises to the nucleus. This is an uncharacterized protein from Schizosaccharomyces pombe (strain 972 / ATCC 24843) (Fission yeast).